The chain runs to 307 residues: N-acetylmuramic acid 6-phosphate etherase (307 aa).

Residues 57–220 form the SIS domain; the sequence is IIEAFKTNGR…TTASMIGVGK (164 aa). Glutamate 85 functions as the Proton donor in the catalytic mechanism. The active site involves glutamate 116.

The protein belongs to the GCKR-like family. MurNAc-6-P etherase subfamily. Homodimer.

The catalysed reaction is N-acetyl-D-muramate 6-phosphate + H2O = N-acetyl-D-glucosamine 6-phosphate + (R)-lactate. The protein operates within amino-sugar metabolism; N-acetylmuramate degradation. Functionally, specifically catalyzes the cleavage of the D-lactyl ether substituent of MurNAc 6-phosphate, producing GlcNAc 6-phosphate and D-lactate. The chain is N-acetylmuramic acid 6-phosphate etherase from Alkaliphilus metalliredigens (strain QYMF).